Reading from the N-terminus, the 88-residue chain is Small cysteine and glycine repeat-containing protein 1 (88 aa).

Residues 4–72 (CGCGGCGGCG…TCSSCGYSCG (69 aa)) form a 10 X 2 AA repeats of CG region.

The protein belongs to the KRTAP type 28 family.

Functionally, in the hair cortex, hair keratin intermediate filaments are embedded in an interfilamentous matrix, consisting of hair keratin-associated proteins (KRTAP), which are essential for the formation of a rigid and resistant hair shaft through their extensive disulfide bond cross-linking with abundant cysteine residues of hair keratins. The matrix proteins include the high-sulfur and high-glycine-tyrosine keratins. The protein is Small cysteine and glycine repeat-containing protein 1 of Homo sapiens (Human).